We begin with the raw amino-acid sequence, 644 residues long: Chaperone protein DnaK (644 aa).

2 disordered regions span residues Gln490–Asp533 and Glu570–Ala644. A compositionally biased stretch (basic and acidic residues) spans Glu492–Ala513. Residues Leu523 to Asp533 show a composition bias toward acidic residues. The segment covering Gly588–Gly622 has biased composition (gly residues). A compositionally biased stretch (acidic residues) spans Asp624 to Ala644.

Belongs to the heat shock protein 70 family.

In terms of biological role, acts as a chaperone. The protein is Chaperone protein DnaK of Halorubrum lacusprofundi (strain ATCC 49239 / DSM 5036 / JCM 8891 / ACAM 34).